We begin with the raw amino-acid sequence, 146 residues long: Large ribosomal subunit protein uL15 (146 aa).

Residues 1–18 (MKLHELKPSEGSRKERNR) are compositionally biased toward basic and acidic residues. The interval 1–50 (MKLHELKPSEGSRKERNRVGRGTGSGNGKTSGRGHKGQKARSGGGVRLGF) is disordered. Residues 21 to 31 (RGTGSGNGKTS) show a composition bias toward gly residues.

The protein belongs to the universal ribosomal protein uL15 family. Part of the 50S ribosomal subunit.

Binds to the 23S rRNA. The protein is Large ribosomal subunit protein uL15 of Listeria welshimeri serovar 6b (strain ATCC 35897 / DSM 20650 / CCUG 15529 / CIP 8149 / NCTC 11857 / SLCC 5334 / V8).